Here is a 66-residue protein sequence, read N- to C-terminus: Large ribosomal subunit protein uL29 (66 aa).

The protein belongs to the universal ribosomal protein uL29 family.

The chain is Large ribosomal subunit protein uL29 from Thermococcus onnurineus (strain NA1).